Consider the following 616-residue polypeptide: Male-specific lethal 1 homolog (616 aa).

Residues 1-116 (MTMRSAVFKA…PPATKQAGIG (116 aa)) form a disordered region. Ser-66 carries the post-translational modification Phosphoserine. Low complexity predominate over residues 81 to 91 (GLLLPAGAAPG). At Ser-127 the chain carries Phosphoserine. The disordered stretch occupies residues 152–218 (TPWAGDKGGA…LGGGGGSGAS (67 aa)). A compositionally biased stretch (low complexity) spans 153–171 (PWAGDKGGAAPPAATASDP). Residues 172–186 (AGPPPLPLPGPPPLA) are compositionally biased toward pro residues. A compositionally biased stretch (low complexity) spans 187-196 (PTATAGTLAA). At Ser-207 the chain carries Phosphoserine. Residues 215–284 (SGASSQAACL…RDNEKERHKL (70 aa)) adopt a coiled-coil conformation. Positions 225-239 (KQILLLQLDLIEQQQ) are interaction with MSL2. Residue Lys-303 forms a Glycyl lysine isopeptide (Lys-Gly) (interchain with G-Cter in SUMO2) linkage. The tract at residues 306–422 (RQPELCETSQ…PKEKAFSSEM (117 aa)) is disordered. Residues 319-348 (SKPFSCGRSGKGHKRKTPFGNTERKTPVKK) carry the Nuclear localization signal motif. Position 355 is an N6-acetyllysine (Lys-355). A phosphothreonine mark is found at Thr-358 and Thr-360. Position 364 is a phosphoserine (Ser-364). Residues Lys-367 and Lys-380 each participate in a glycyl lysine isopeptide (Lys-Gly) (interchain with G-Cter in SUMO2) cross-link. Residues 378–394 (VCKRELRSQETPEKPRS) are compositionally biased toward basic and acidic residues. At Ser-385 the chain carries Phosphoserine. Residue Thr-388 is modified to Phosphothreonine. Ser-395 is modified (phosphoserine). Polar residues predominate over residues 395 to 409 (SVDTPPRLSTPQKGP). Phosphothreonine occurs at positions 398 and 404. Phosphoserine is present on residues Ser-444, Ser-452, and Ser-484. Positions 474–593 (VLAVPSWRDH…LAPQNFELPW (120 aa)) constitute a PEHE domain. The interaction with KAT8 HAT domain stretch occupies residues 498–516 (ENLDDSVFSKRHAKLELDE). A Bipartite nuclear localization signal motif is present at residues 507–521 (KRHAKLELDEKRRKR). An interaction with MSL3 MRG domain region spans residues 552–593 (EVTSFFPEPDDVESLLITPFLPVVAFGRPLPKLAPQNFELPW).

Belongs to the msl-1 family. As to quaternary structure, component of a multisubunit histone acetyltransferase complex (MSL) at least composed of the KAT8/MOF/MYST1, MSL1/hampin, MSL2 and MSL3. Interacts (via PEHE domain) with KAT8 (via HAT domain) and MSL3 (via MRG domain); both interactions are direct. Directly interacts with MSL2 via its coiled coil domain. Directly interacts with NUPR1. Interacts with TP53BP1; this interaction may be required for MSL1 DNA repair activity, but not for histone acetyltransferase activity. Forms a MSL heterotetrameric core with MSL2. Isoform 1 and isoform 3 interact with TTC4. Isoform 1 interacts with ECM2 and PIHD1. In terms of processing, sumoylated with SUMO1. Isoform 3 and isoform 5 are testis-specific. Isoform 1 and isoform 4 are ubiquitously expressed. Isoform 2 is expressed at low levels in the testis and brain.

The protein resides in the nucleus. The protein localises to the nucleus speckle. Its subcellular location is the nucleoplasm. Non-catalytic component of the MSL histone acetyltransferase complex, a multiprotein complex that mediates the majority of histone H4 acetylation at 'Lys-16' (H4K16ac), an epigenetic mark that prevents chromatin compaction. The MSL complex is required for chromosome stability and genome integrity by maintaining homeostatic levels of H4K16ac. The MSL complex is also involved in gene dosage by promoting up-regulation of genes expressed by the X chromosome. X up-regulation is required to compensate for autosomal biallelic expression. The MSL complex also participates in gene dosage compensation by promoting expression of Tsix non-coding RNA. Within the MSL complex, acts as a scaffold to tether MSL3 and KAT8 together for enzymatic activity regulation. Greatly enhances MSL2 E3 ubiquitin ligase activity, promoting monoubiquitination of histone H2B at 'Lys-34' (H2BK34Ub). This modification in turn stimulates histone H3 methylation at 'Lys-4' (H3K4me) and 'Lys-79' (H3K79me) and leads to gene activation, including that of HOXA9 and MEIS1. In Mus musculus (Mouse), this protein is Male-specific lethal 1 homolog.